Here is a 203-residue protein sequence, read N- to C-terminus: Cilia- and flagella-associated protein 20 (203 aa).

This sequence belongs to the CFAP20 family.

The protein localises to the nucleus. It is found in the cytoplasm. Its subcellular location is the cytoskeleton. The protein resides in the microtubule organizing center. It localises to the centrosome. The protein localises to the centriole. It is found in the cilium basal body. Its subcellular location is the cilium axoneme. Cilium- and flagellum-specific protein that plays a role in axonemal structure organization and motility. Microtubule inner protein (MIP) part of the dynein-decorated doublet microtubules (DMTs) in cilia axoneme, which is required for motile cilia beating. Involved in the regulation of the size and morphology of cilia. Required for axonemal microtubules polyglutamylation. The chain is Cilia- and flagella-associated protein 20 from Caenorhabditis briggsae.